Consider the following 309-residue polypeptide: Manganese ABC transporter substrate-binding lipoprotein PsaA (309 aa).

The first 19 residues, 1–19, serve as a signal peptide directing secretion; the sequence is MKKLGTLLVLFLSVIALVA. A lipid anchor (N-palmitoyl cysteine) is attached at Cys20. Cys20 is lipidated: S-diacylglycerol cysteine. Mn(2+) contacts are provided by His67, His139, Glu205, and Asp280.

The protein belongs to the bacterial solute-binding protein 9 family. Lipoprotein receptor antigen (Lrai) subfamily.

The protein localises to the cell membrane. Its function is as follows. Part of the ATP-binding cassette (ABC) transport system PsaABC involved in manganese import. Binds manganese with high affinity and specificity and delivers it to the membrane permease for translocation into the cytoplasm. Also acts as an adhesin which is involved on adherence to extracellular matrix. The sequence is that of Manganese ABC transporter substrate-binding lipoprotein PsaA (psaA) from Streptococcus anginosus.